We begin with the raw amino-acid sequence, 353 residues long: tRNA N6-adenosine threonylcarbamoyltransferase (353 aa).

Residues His-119 and His-123 each coordinate Fe cation. Substrate-binding positions include 145–149, Asp-178, Gly-191, and Asn-285; that span reads LVSGG. Asp-313 is a Fe cation binding site.

This sequence belongs to the KAE1 / TsaD family. The cofactor is Fe(2+).

The protein localises to the cytoplasm. The enzyme catalyses L-threonylcarbamoyladenylate + adenosine(37) in tRNA = N(6)-L-threonylcarbamoyladenosine(37) in tRNA + AMP + H(+). Required for the formation of a threonylcarbamoyl group on adenosine at position 37 (t(6)A37) in tRNAs that read codons beginning with adenine. Is involved in the transfer of the threonylcarbamoyl moiety of threonylcarbamoyl-AMP (TC-AMP) to the N6 group of A37, together with TsaE and TsaB. TsaD likely plays a direct catalytic role in this reaction. The chain is tRNA N6-adenosine threonylcarbamoyltransferase from Magnetococcus marinus (strain ATCC BAA-1437 / JCM 17883 / MC-1).